We begin with the raw amino-acid sequence, 95 residues long: uncharacterized protein (95 aa).

Residues 60–89 (VKNMINRIVEELDKRIDEIKEGLNELEKSG) are a coiled coil.

This is an uncharacterized protein from Sulfolobus islandicus filamentous virus (isolate Iceland/Hveragerdi) (SIFV).